Here is a 435-residue protein sequence, read N- to C-terminus: Thiosulfate sulfurtransferase YnjE (435 aa).

The N-terminal stretch at 1–23 (MKRVSQMTALAMALGLACASSWA) is a signal peptide. Rhodanese domains lie at 36–138 (QQQN…RLQK), 164–270 (PAGD…PVER), and 304–425 (HRQD…NPVA). Catalysis depends on Cys385, which acts as the Cysteine persulfide intermediate. Substrate is bound at residue Arg390.

In terms of assembly, monomer.

Its subcellular location is the periplasm. It carries out the reaction thiosulfate + hydrogen cyanide = thiocyanate + sulfite + 2 H(+). The sequence is that of Thiosulfate sulfurtransferase YnjE (ynjE) from Escherichia coli (strain K12).